The following is a 315-amino-acid chain: MSESLRIIFAGTPDFAARHLDALLSSGHNVVGVFTQPDRPAGRGKKLMPSPVKVLAEEKGLPVFQPVSLRPQENQQLVAELQADVMVVVAYGLILPKAVLEMPRLGCINVHGSLLPRWRGAAPIQRSLWAGDAETGVTIMQMDVGLDTGDMLYKLSCPITAEDTSGTLYDKLAELGPQGLITTLKQLADGTAKPEVQDETLVTYAEKLSKEEARIDWSLSAAQLERCIRAFNPWPMSWLEIEGQPVKVWKASVIDTATNAAPGTILEANKQGIQVATGDGILNLLSLQPAGKKAMSAQDLLNSRREWFVPGNRLV.

The segment at 2–189 (SESLRIIFAG…LITTLKQLAD (188 aa)) is N-terminal domain. (6S)-5,6,7,8-tetrahydrofolate is bound at residue 113-116 (SLLP). The interval 210–315 (KEEARIDWSL…EWFVPGNRLV (106 aa)) is C-terminal domain.

The protein belongs to the Fmt family. As to quaternary structure, monomer.

The catalysed reaction is L-methionyl-tRNA(fMet) + (6R)-10-formyltetrahydrofolate = N-formyl-L-methionyl-tRNA(fMet) + (6S)-5,6,7,8-tetrahydrofolate + H(+). Its activity is regulated as follows. Activity is optimum in the presence of Mg(2+) and K(+). In terms of biological role, attaches a formyl group to the free amino group of methionyl-tRNA(fMet). The formyl group appears to play a dual role in the initiator identity of N-formylmethionyl-tRNA by promoting its recognition by IF2 and preventing the misappropriation of this tRNA by the elongation apparatus. The chain is Methionyl-tRNA formyltransferase from Escherichia coli (strain K12).